The sequence spans 3907 residues: A-kinase anchor protein 9 (3907 aa).

Basic and acidic residues predominate over residues 1–14 (MEDEERQKKLEAGK). Residues 1–57 (MEDEERQKKLEAGKAKLAQFRQRKAQSDGQSPSKKQKKKRKTSSSKHDVSAHHDLNI) are disordered. The segment covering 34–44 (KKQKKKRKTSS) has biased composition (basic residues). Basic and acidic residues predominate over residues 45 to 56 (SKHDVSAHHDLN). 7 coiled-coil regions span residues 152-902 (DSPT…ELHL), 932-1010 (EVVE…ENVQ), 1088-1173 (QPSE…QTMK), 1241-1268 (ELQD…EEYN), 1324-1380 (KLSS…ESTV), 1422-1447 (VKEE…VAKV), and 1573-1647 (SMDA…DNEN). The residue at position 153 (Ser153) is a Phosphoserine. Ser1327 carries the phosphoserine modification. Residues 1682–1692 (STQTQNGNENQ) are compositionally biased toward low complexity. Residues 1682 to 1713 (STQTQNGNENQGEVEEQTFKEKELDRKPEDVP) are disordered. Positions 1698-1711 (QTFKEKELDRKPED) are enriched in basic and acidic residues. Ser1765 is subject to Phosphoserine. 6 coiled-coil regions span residues 1845 to 2443 (NISS…VEKI), 2532 to 2549 (ETEM…IVEE), 2591 to 2764 (QLRE…SKKA), 3061 to 3088 (LNCL…ADRR), 3120 to 3466 (ELLE…NLNE), and 3583 to 3685 (SLTE…NDSL). Residues 2542 to 2555 (NLQKIVEEKVAAAL) form a PKA-RII subunit binding domain region. The segment at 3377–3405 (RQQMEKDRQVHRKTLQTEQEANTEGQKKM) is disordered. A phosphoserine mark is found at Ser3690, Ser3842, Ser3865, and Ser3897.

Interacts with the regulatory region of protein kinase N (PKN), protein phosphatase 2A (PP2A), protein phosphatase 1 (PP1) and the immature non-phosphorylated form of PKC epsilon. Interacts with CIP4 and FNBP1. Interacts with chloride intracellular channel proteins CLIC1, CLIC4 and CLIC5. CSNK1D binding promotes its centrosomal subcellular location. Interacts with GM130/GOLGA2; leading to recruitment to the Golgi apparatus. Interacts with KCNQ1; targets protein kinase A (PKA) catalytic and regulatory subunits and protein phosphatase 1 (PP1), to the heterodimer KCNQ1-KCNE1. Interacts with PDE4DIP isoform 13/MMG8/SMYLE; this interaction stabilizes both proteins. In complex with PDE4DIP isoform 13, recruits CAMSAP2 to the Golgi apparatus. Forms a pericentrosomal complex with CDK5RAP2, EB1/MAPRE1 and PDE4DIP isoform 13; within this complex, MAPRE1 binding to CDK5RAP2 may be mediated by PDE4DIP. Interacts with MAPRE1 and MAPRE3. Interacts (via C-terminus) with CAMSAP2; this interaction is much stronger in the presence of PDE4DIP isoform 13/MMG8/SMYLE. Interacts with CAMSAP3. Interacts (via C-terminus) with the gamma-tubulin ring complex (gamma-TuRC), composed of gamma-tubulin, TUBGCP2, TUBGCP3, TUBGCP4, TUBGCP5 and TUBGCP6. Widely expressed. Isoform 4: Highly expressed in skeletal muscle and in pancreas.

The protein localises to the golgi apparatus. It is found in the cytoplasm. The protein resides in the cytoskeleton. Its subcellular location is the microtubule organizing center. It localises to the centrosome. Functionally, scaffolding protein that assembles several protein kinases and phosphatases on the centrosome and Golgi apparatus. Required to maintain the integrity of the Golgi apparatus. Required for microtubule nucleation at the cis-side of the Golgi apparatus. Required for association of the centrosomes with the poles of the bipolar mitotic spindle during metaphase. In complex with PDE4DIP isoform 13/MMG8/SMYLE, recruits CAMSAP2 to the Golgi apparatus and tethers non-centrosomal minus-end microtubules to the Golgi, an important step for polarized cell movement. In complex with PDE4DIP isoform 13/MMG8/SMYLE, EB1/MAPRE1 and CDK5RAP2, contributes to microtubules nucleation and extension also from the centrosome to the cell periphery. Associated with the N-methyl-D-aspartate receptor and is specifically found in the neuromuscular junction (NMJ) as well as in neuronal synapses, suggesting a role in the organization of postsynaptic specializations. The polypeptide is A-kinase anchor protein 9 (AKAP9) (Homo sapiens (Human)).